Here is a 195-residue protein sequence, read N- to C-terminus: NADH-quinone oxidoreductase subunit B (195 aa).

The [4Fe-4S] cluster site is built by cysteine 74, cysteine 75, cysteine 139, and cysteine 169.

It belongs to the complex I 20 kDa subunit family. In terms of assembly, NDH-1 is composed of 14 different subunits. Subunits NuoB, C, D, E, F, and G constitute the peripheral sector of the complex. It depends on [4Fe-4S] cluster as a cofactor.

The protein resides in the cell inner membrane. It carries out the reaction a quinone + NADH + 5 H(+)(in) = a quinol + NAD(+) + 4 H(+)(out). In terms of biological role, NDH-1 shuttles electrons from NADH, via FMN and iron-sulfur (Fe-S) centers, to quinones in the respiratory chain. The immediate electron acceptor for the enzyme in this species is believed to be ubiquinone. Couples the redox reaction to proton translocation (for every two electrons transferred, four hydrogen ions are translocated across the cytoplasmic membrane), and thus conserves the redox energy in a proton gradient. The chain is NADH-quinone oxidoreductase subunit B from Methylobacterium radiotolerans (strain ATCC 27329 / DSM 1819 / JCM 2831 / NBRC 15690 / NCIMB 10815 / 0-1).